The chain runs to 66 residues: COP-associated protein (66 aa).

Residues 1–66 enclose the HMA domain; it reads MKVTFQVPSI…ALLDAGQEVV (66 aa). Residues Cys-12 and Cys-15 each contribute to the Cu cation site.

Functionally, part of a cation-transporting system which is associated with copper export out of the H.pylori cells. The protein is COP-associated protein (copP) of Helicobacter pylori (strain J99 / ATCC 700824) (Campylobacter pylori J99).